Here is a 518-residue protein sequence, read N- to C-terminus: Cytokinin hydroxylase (518 aa).

A helical transmembrane segment spans residues 1 to 21 (MLLTILKSLLVIFVTTILRVL). C464 contributes to the heme binding site.

The protein belongs to the cytochrome P450 family. The cofactor is heme. Expressed in roots and flowers.

The protein resides in the membrane. It carries out the reaction N(6)-(dimethylallyl)adenosine 5'-phosphate + NADPH + O2 + H(+) = 9-ribosyl-trans-zeatin 5'-phosphate + NADP(+) + H2O. The enzyme catalyses N(6)-(dimethylallyl)adenosine 5'-diphosphate + NADPH + O2 + H(+) = 9-ribosyl-trans-zeatin 5'-diphosphate + NADP(+) + H2O. The catalysed reaction is N(6)-(dimethylallyl)adenosine 5'-triphosphate + NADPH + O2 + H(+) = 9-ribosyl-trans-zeatin 5'-triphosphate + NADP(+) + H2O. In terms of biological role, cytokinin hydroxylase that catalyzes the biosynthesis of trans-zeatin via the isopentenyladenine riboside 5'-monophosphate (iPRMP)-dependent pathway. Can use isopentenyladenosine-5'-monophosphate, isopentenyladenosine-5'-diphosphate and isopentenyladenosine-5'-triphosphate as substrate. This is Cytokinin hydroxylase (CYP735A1) from Arabidopsis thaliana (Mouse-ear cress).